Consider the following 340-residue polypeptide: Phenylalanine--tRNA ligase alpha subunit (340 aa).

E255 lines the Mg(2+) pocket.

It belongs to the class-II aminoacyl-tRNA synthetase family. Phe-tRNA synthetase alpha subunit type 1 subfamily. As to quaternary structure, tetramer of two alpha and two beta subunits. Mg(2+) serves as cofactor.

It is found in the cytoplasm. The catalysed reaction is tRNA(Phe) + L-phenylalanine + ATP = L-phenylalanyl-tRNA(Phe) + AMP + diphosphate + H(+). The chain is Phenylalanine--tRNA ligase alpha subunit from Exiguobacterium sibiricum (strain DSM 17290 / CCUG 55495 / CIP 109462 / JCM 13490 / 255-15).